Here is a 556-residue protein sequence, read N- to C-terminus: Myb/SANT-like DNA-binding domain-containing protein 2 (556 aa).

2 stretches are compositionally biased toward polar residues: residues 1–10 (MAASCGSSQL) and 36–45 (GNPSLSDPST). Residues 1 to 82 (MAASCGSSQL…GGASPSVSFS (82 aa)) are disordered. A compositionally biased stretch (gly residues) spans 56 to 74 (PAAGGAGLGGGGAAGGRGG). Residues 99-169 (SWTPAETNAL…QCRERIKTLR (71 aa)) form the Myb-like domain. The disordered stretch occupies residues 431–458 (PRSPLAEPRGADPSNETPGELEVPSPQA).

This Gallus gallus (Chicken) protein is Myb/SANT-like DNA-binding domain-containing protein 2 (MSANTD2).